The following is an 862-amino-acid chain: Protein translocase subunit SecA (862 aa).

ATP-binding positions include glutamine 88, 106–110, and aspartate 506; that span reads GEGKT. Zn(2+) is bound by residues cysteine 839, cysteine 841, cysteine 850, and histidine 851.

This sequence belongs to the SecA family. In terms of assembly, monomer and homodimer. Part of the essential Sec protein translocation apparatus which comprises SecA, SecYEG and auxiliary proteins SecDF-YajC and YidC. Requires Zn(2+) as cofactor.

Its subcellular location is the cell inner membrane. It localises to the cytoplasm. The enzyme catalyses ATP + H2O + cellular proteinSide 1 = ADP + phosphate + cellular proteinSide 2.. Its function is as follows. Part of the Sec protein translocase complex. Interacts with the SecYEG preprotein conducting channel. Has a central role in coupling the hydrolysis of ATP to the transfer of proteins into and across the cell membrane, serving as an ATP-driven molecular motor driving the stepwise translocation of polypeptide chains across the membrane. This is Protein translocase subunit SecA from Campylobacter jejuni subsp. jejuni serotype O:2 (strain ATCC 700819 / NCTC 11168).